Here is a 473-residue protein sequence, read N- to C-terminus: Argininosuccinate lyase (473 aa).

It belongs to the lyase 1 family. Argininosuccinate lyase subfamily.

Its subcellular location is the cytoplasm. The catalysed reaction is 2-(N(omega)-L-arginino)succinate = fumarate + L-arginine. Its pathway is amino-acid biosynthesis; L-arginine biosynthesis; L-arginine from L-ornithine and carbamoyl phosphate: step 3/3. This is Argininosuccinate lyase from Mycobacteroides abscessus (strain ATCC 19977 / DSM 44196 / CCUG 20993 / CIP 104536 / JCM 13569 / NCTC 13031 / TMC 1543 / L948) (Mycobacterium abscessus).